The primary structure comprises 431 residues: 3-phosphoshikimate 1-carboxyvinyltransferase (431 aa).

3-phosphoshikimate is bound by residues K21, S22, and R26. Phosphoenolpyruvate is bound at residue K21. The phosphoenolpyruvate site is built by G93 and R121. Residues S166, Q168, D318, and K345 each contribute to the 3-phosphoshikimate site. Q168 provides a ligand contact to phosphoenolpyruvate. D318 functions as the Proton acceptor in the catalytic mechanism. Phosphoenolpyruvate contacts are provided by R349 and R391.

The protein belongs to the EPSP synthase family. Monomer.

It localises to the cytoplasm. It catalyses the reaction 3-phosphoshikimate + phosphoenolpyruvate = 5-O-(1-carboxyvinyl)-3-phosphoshikimate + phosphate. It participates in metabolic intermediate biosynthesis; chorismate biosynthesis; chorismate from D-erythrose 4-phosphate and phosphoenolpyruvate: step 6/7. In terms of biological role, catalyzes the transfer of the enolpyruvyl moiety of phosphoenolpyruvate (PEP) to the 5-hydroxyl of shikimate-3-phosphate (S3P) to produce enolpyruvyl shikimate-3-phosphate and inorganic phosphate. In Sulfurihydrogenibium sp. (strain YO3AOP1), this protein is 3-phosphoshikimate 1-carboxyvinyltransferase.